Consider the following 777-residue polypeptide: Subtilisin-like protease SBT1.4 (777 aa).

An N-terminal signal peptide occupies residues 1–25 (MAKLSLSSIFFVFPLLLCFFSPSSS). Positions 26 to 110 (SSDGLESYIV…VIPDQAREIH (85 aa)) are cleaved as a propeptide — activation peptide. The Inhibitor I9 domain maps to 32-110 (SYIVHVQRSH…VIPDQAREIH (79 aa)). A Peptidase S8 domain is found at 115–614 (PAFLGFSQNS…AGHVDPNKAL (500 aa)). Residue D142 is the Charge relay system of the active site. The N-linked (GlcNAc...) asparagine glycan is linked to N198. The interval 199–223 (GTKKHAAKESRSPRDTEGHGTHTAS) is disordered. A compositionally biased stretch (basic and acidic residues) spans 205–218 (AKESRSPRDTEGHG). H217 serves as the catalytic Charge relay system. N232 and N395 each carry an N-linked (GlcNAc...) asparagine glycan. The region spanning 376 to 461 (LSLVYSGDCG…VGAKAGDQIR (86 aa)) is the PA domain. S546 acts as the Charge relay system in catalysis.

This sequence belongs to the peptidase S8 family.

It localises to the secreted. This is Subtilisin-like protease SBT1.4 from Arabidopsis thaliana (Mouse-ear cress).